We begin with the raw amino-acid sequence, 384 residues long: MSTLVQCGYFERGQCQSCRHIKLPMAQQLAAKNLELQQLLAPFVDKTEPQFLPPVVGDSSGFRNKAKMVALGAAHAPVLGIVSPSGEAVSLCDCLLYPTDMQALLHRLERFVQQAGIPPYRVDKAKGELKFILLTRSQVRGEYMLRFVLRSRDAIARIERELPTLMAEYPQIKVVSVNLQPVHMAILEGEEEIFLTENTRLEERFNDVPLFIRPKSFFQTNPQVAAKLYQTAREWVADFAPASLWDLFCGVGGFGLHCAAKDIPLTGIEIEAEAIACAKMSAQLMGLDKVEFMALDSTDFAKGEAAQTKPELIIVNPPRRGIGESLCHSLSEFAPKAILYSSCNPKTLAKDLGHIRGYRLTKVQLFDLFPHSDHFEVLALLVKD.

Residues Cys-7, Cys-15, Cys-18, and Cys-94 each contribute to the [4Fe-4S] cluster site. Gln-219, Phe-248, Glu-269, and Asn-316 together coordinate S-adenosyl-L-methionine. Cys-343 (nucleophile) is an active-site residue.

This sequence belongs to the class I-like SAM-binding methyltransferase superfamily. RNA M5U methyltransferase family. RlmC subfamily.

It carries out the reaction uridine(747) in 23S rRNA + S-adenosyl-L-methionine = 5-methyluridine(747) in 23S rRNA + S-adenosyl-L-homocysteine + H(+). Functionally, catalyzes the formation of 5-methyl-uridine at position 747 (m5U747) in 23S rRNA. The polypeptide is 23S rRNA (uracil(747)-C(5))-methyltransferase RlmC (Shewanella sp. (strain ANA-3)).